Consider the following 686-residue polypeptide: MIQNPKRYTITAALPYTNGPIHIGHLAGVYMPSDIYSRYLRLQGKDVAFMCGSDEHGVAISMKAKKEGITPQEVIDKYDGIIRKSFVDFGISFDNYSRTSAKIHHDTASEFFKKLYDKGDFIEEVTEQLYDAKADQFLADRFVVGTCPKCGNEEAYGDQCEKCGSTLNATDLINPKSTITGETPIMKSTKHWFLPLDRYSDFLTKWILEGHKSDWKPNVYGQVKSWIDGGLEPRAVTRDLDWGIDVPVAGAEGKKLYVWFDAPIGYISATKEWAAREGKDWELYWKNEDTKLVHFIGKDNIVFHCIIFPAMLKAEGSYILPDNVPANEFLNLEGNKLSTSKNWAVWLHEYLEDFPNQQDVLRYALTANAPESKDNDFTWKDFQARNNNELAAIFGNFINRVVVLTNKYYEGVVPTPNKFSEVDEATLTELKAYPAVISSSIERYRFREALGELMNVARLGNKYLADEEPWKMVKTDPERVKTQMYVALQIATALRVLCEPFLPFTAEKLNKMLKIDAKLSWNDVTTNSDLILAGHKIGEGEILFAQIEDEQIQKQIDKLEATKTANIAENKKAEPQKELIQYDDFAKMDLRVGTIIEAEKMPKANKLLVLKVDTGIDVRTIVSGIAESFSPEEIIGKQVTVLVNLAPRALRGIESQGMILMTNLPDGKLAFVNPDVAGVGNGEGIN.

The 'HIGH' region signature appears at 15-25 (PYTNGPIHIGH). Zn(2+) is bound by residues Cys147, Cys150, Cys160, and Cys163. Positions 336–340 (KLSTS) match the 'KMSKS' region motif. Thr339 is a binding site for ATP. A tRNA-binding domain is found at 584 to 686 (DFAKMDLRVG…AGVGNGEGIN (103 aa)).

Belongs to the class-I aminoacyl-tRNA synthetase family. MetG type 1 subfamily. In terms of assembly, homodimer. Requires Zn(2+) as cofactor.

It is found in the cytoplasm. The catalysed reaction is tRNA(Met) + L-methionine + ATP = L-methionyl-tRNA(Met) + AMP + diphosphate. Its function is as follows. Is required not only for elongation of protein synthesis but also for the initiation of all mRNA translation through initiator tRNA(fMet) aminoacylation. The sequence is that of Methionine--tRNA ligase from Flavobacterium psychrophilum (strain ATCC 49511 / DSM 21280 / CIP 103535 / JIP02/86).